Consider the following 731-residue polypeptide: Elongation factor 2 (731 aa).

The tr-type G domain occupies 19–234; it reads EYIRNIGICA…DIIDYCNEGK (216 aa). Residues 28-35, 94-98, and 148-151 each bind GTP; these read AHIDHGKT, DTPGH, and NKVD. The residue at position 598 (histidine 598) is a Diphthamide.

The protein belongs to the TRAFAC class translation factor GTPase superfamily. Classic translation factor GTPase family. EF-G/EF-2 subfamily.

It is found in the cytoplasm. Functionally, catalyzes the GTP-dependent ribosomal translocation step during translation elongation. During this step, the ribosome changes from the pre-translocational (PRE) to the post-translocational (POST) state as the newly formed A-site-bound peptidyl-tRNA and P-site-bound deacylated tRNA move to the P and E sites, respectively. Catalyzes the coordinated movement of the two tRNA molecules, the mRNA and conformational changes in the ribosome. In Methanobrevibacter ruminantium (strain ATCC 35063 / DSM 1093 / JCM 13430 / OCM 146 / M1) (Methanobacterium ruminantium), this protein is Elongation factor 2.